Reading from the N-terminus, the 89-residue chain is Small ribosomal subunit protein uS15 (89 aa).

It belongs to the universal ribosomal protein uS15 family. As to quaternary structure, part of the 30S ribosomal subunit. Forms a bridge to the 50S subunit in the 70S ribosome, contacting the 23S rRNA.

One of the primary rRNA binding proteins, it binds directly to 16S rRNA where it helps nucleate assembly of the platform of the 30S subunit by binding and bridging several RNA helices of the 16S rRNA. Functionally, forms an intersubunit bridge (bridge B4) with the 23S rRNA of the 50S subunit in the ribosome. This is Small ribosomal subunit protein uS15 from Bifidobacterium animalis subsp. lactis (strain AD011).